The chain runs to 172 residues: Thioredoxin M5, chloroplastic (172 aa).

A chloroplast-targeting transit peptide spans 1 to 59 (MALETCFRAWATLHAPQPPSSGGSRDRLLLSGAGSSQSKPRLSVASPSPLRPASRFACQ). The segment at 17 to 47 (QPPSSGGSRDRLLLSGAGSSQSKPRLSVASP) is disordered. The Thioredoxin domain occupies 60 to 171 (CSNVVDEVVV…LATIIDKYVS (112 aa)). Catalysis depends on nucleophile residues cysteine 95 and cysteine 98. A disulfide bridge links cysteine 95 with cysteine 98.

This sequence belongs to the thioredoxin family. Plant M-type subfamily. As to expression, expressed in leaves and at lower levels in flowers.

It localises to the plastid. Its subcellular location is the chloroplast. Its function is as follows. Thiol-disulfide oxidoreductase probably involved in the redox regulation of chloroplastic enzymes. Required for chloroplast biogenesis and differentiation. Functions as an electron donor for plastidial 2-Cys peroxiredoxins and participates in hydrogen peroxide scavenging system in chloroplasts. Possesses reducing activity towards insulin disulfide bonds. The polypeptide is Thioredoxin M5, chloroplastic (TRXM) (Oryza sativa subsp. japonica (Rice)).